A 159-amino-acid polypeptide reads, in one-letter code: Bacterioferritin (159 aa).

Positions 1–145 (MQGDPEVLRL…TQLELMDKLG (145 aa)) constitute a Ferritin-like diiron domain. Glu51 provides a ligand contact to Fe cation. Residue Met52 coordinates heme b. 4 residues coordinate Fe cation: His54, Glu94, Glu127, and His130.

The protein belongs to the bacterioferritin family. As to quaternary structure, homooligomer of 24 subunits, arranged as 12 dimers, that are packed together to form an approximately spherical molecule with a central cavity, in which large amounts of iron can be deposited. The cofactor is heme b.

The catalysed reaction is 4 Fe(2+) + O2 + 4 H(+) = 4 Fe(3+) + 2 H2O. The enzyme catalyses Fe(2+)(in) = Fe(2+)(out). Its function is as follows. Iron-storage protein, whose ferroxidase center binds Fe(2+), oxidizes it using dioxygen to Fe(3+), and participates in the subsequent Fe(3+) oxide mineral core formation within the central cavity of the BFR protein shell. The sequence is that of Bacterioferritin (bfr) from Mycobacterium avium.